We begin with the raw amino-acid sequence, 352 residues long: PhoH-like protein (352 aa).

A disordered region spans residues 1–21 (MTSRETRAADAAGARQADAQV). Low complexity predominate over residues 9–20 (ADAAGARQADAQ). 150-157 (GPAGTGKT) provides a ligand contact to ATP.

Belongs to the PhoH family.

It is found in the cytoplasm. The sequence is that of PhoH-like protein from Mycobacterium bovis (strain ATCC BAA-935 / AF2122/97).